A 465-amino-acid polypeptide reads, in one-letter code: Mothers against decapentaplegic homolog 1 (465 aa).

Met-1 carries the N-acetylmethionine modification. Residues Pro-12–Pro-136 enclose the MH1 domain. 4 residues coordinate Zn(2+): Cys-64, Cys-109, Cys-121, and His-126. The tract at residues Asn-162–Pro-249 is disordered. Residues Pro-179–Ser-210 show a composition bias toward low complexity. The span at Asp-221–Asp-232 shows a compositional bias: pro residues. Positions Trp-271 to Ser-465 constitute an MH2 domain. Position 322 is a phosphothreonine; by MINK1, TNIK and MAP4K4 (Thr-322). An L3 loop region spans residues Lys-418–Asp-428. Residues Ser-463 and Ser-465 each carry the phosphoserine modification.

It belongs to the dwarfin/SMAD family. In terms of assembly, found in a complex with SMAD4 and YY1. Interacts with HGS, NANOG and ZCCHC12. Upon C-terminus phosphorylation: forms trimers with another SMAD1 and the co-SMAD SMAD4. Interacts with PEBP2-alpha subunit, CREB-binding protein (CBP), p300, SMURF1, SMURF2, USP15 and HOXC8. Associates with ZNF423 or ZNF521 in response to BMP2 leading to activate transcription of BMP target genes. Interacts with SKOR1. Interacts (via MH2 domain) with LEMD3. Binding to LEMD3 results in at least a partial reduction of receptor-mediated phosphorylation. Forms a ternary complex with PSMB4 and OAZ1 before PSMB4 is incorporated into the 20S proteasome. Interacts (via MH2 domain) with FAM83G (via MH2 domain); in a SMAD4-independent manner. Interacts with ZC3H3. Interacts with TMEM119. Interacts (via MH1 and MH2 domains) with ZNF8. Interacts with RANBP3L; the interaction increases when SMAD1 is not phosphorylated and mediates SMAD1 nuclear export. Interacts with EGR1; this interaction inhibits SMAD1 dephosphorylation. Interacts with SMAD6. Interacts with YAP1. Interacts with MTMR4; negatively regulates BMP signaling through SMAD1 dephosphorylation and retention in endosomes. Phosphorylation of the C-terminal SVS motif by BMP type 1 receptor kinase activates SMAD1 by promoting dissociation from the receptor and trimerization with SMAD4. Phosphorylation by ERK2 MAP kinase in response to EGF or HGF prevents SMAD1 nuclear accumulation and transcriptional activity in response to BMP. Dephosphorylation, probably by PPM1A, induces its export from the nucleus to the cytoplasm. Dephosphorylation is inhibited by association with EGR1. Phosphorylation by CDK8/9 creates binding sites for YAP1, and subsequent phosphorylation by GSK3 switches off YAP1 binding and adds binding sites for SMURF1. In terms of processing, ubiquitinated by SMAD-specific E3 ubiquitin ligase SMURF1, leading to its degradation. Monoubiquitinated, leading to prevent DNA-binding. Deubiquitination by USP15 alleviates inhibition and promotes activation of TGF-beta target genes. Dephosphorylation, probably by PPM1A, induces its export from the nucleus to the cytoplasm. Phospho-SMAD1 is ubiquitinated by CHIP leading to disruption of the SMAD1-SMAD4 complex.

The protein localises to the cytoplasm. It localises to the nucleus. In terms of biological role, transcriptional modulator that plays a role in various cellular processes, including embryonic development, cell differentiation, and tissue homeostasis. Upon BMP ligand binding to their receptors at the cell surface, is phosphorylated by activated type I BMP receptors (BMPRIs) and associates with SMAD4 to form an heteromeric complex which translocates into the nucleus acting as transcription factor. In turn, the hetero-trimeric complex recognizes cis-regulatory elements containing Smad Binding Elements (SBEs) to modulate the outcome of the signaling network. SMAD1/OAZ1/PSMB4 complex mediates the degradation of the CREBBP/EP300 repressor SNIP1. Positively regulates BMP4-induced expression of odontogenic development regulator MSX1 following IPO7-mediated nuclear import. This Bos taurus (Bovine) protein is Mothers against decapentaplegic homolog 1 (SMAD1).